The following is a 122-amino-acid chain: Holo-[acyl-carrier-protein] synthase (122 aa).

Residues aspartate 8 and glutamate 56 each contribute to the Mg(2+) site.

This sequence belongs to the P-Pant transferase superfamily. AcpS family. Mg(2+) serves as cofactor.

Its subcellular location is the cytoplasm. The catalysed reaction is apo-[ACP] + CoA = holo-[ACP] + adenosine 3',5'-bisphosphate + H(+). In terms of biological role, transfers the 4'-phosphopantetheine moiety from coenzyme A to a Ser of acyl-carrier-protein. The protein is Holo-[acyl-carrier-protein] synthase of Streptomyces griseus subsp. griseus (strain JCM 4626 / CBS 651.72 / NBRC 13350 / KCC S-0626 / ISP 5235).